The primary structure comprises 124 residues: Iron-sulfur cluster insertion protein ErpA (124 aa).

The iron-sulfur cluster site is built by Cys52, Cys116, and Cys118.

Belongs to the HesB/IscA family. As to quaternary structure, homodimer. Iron-sulfur cluster serves as cofactor.

In terms of biological role, required for insertion of 4Fe-4S clusters for at least IspG. The protein is Iron-sulfur cluster insertion protein ErpA of Acidithiobacillus ferrooxidans (strain ATCC 23270 / DSM 14882 / CIP 104768 / NCIMB 8455) (Ferrobacillus ferrooxidans (strain ATCC 23270)).